Here is a 321-residue protein sequence, read N- to C-terminus: Ribosomal RNA small subunit methyltransferase H (321 aa).

S-adenosyl-L-methionine-binding positions include 33 to 35 (AGH), Asp58, Phe85, Asp111, and Gln118.

The protein belongs to the methyltransferase superfamily. RsmH family.

Its subcellular location is the cytoplasm. It carries out the reaction cytidine(1402) in 16S rRNA + S-adenosyl-L-methionine = N(4)-methylcytidine(1402) in 16S rRNA + S-adenosyl-L-homocysteine + H(+). Specifically methylates the N4 position of cytidine in position 1402 (C1402) of 16S rRNA. This chain is Ribosomal RNA small subunit methyltransferase H, found in Chloroherpeton thalassium (strain ATCC 35110 / GB-78).